Consider the following 210-residue polypeptide: Na(+)-translocating NADH-quinone reductase subunit D (210 aa).

6 helical membrane passes run 9–29 (SVLI…LGVC), 42–62 (LVMT…ISLI), 72–92 (IIVQ…VLQA), 103–123 (VFVG…AFAM), 131–151 (FMDG…VGFV), and 178–198 (NGLL…IWII).

This sequence belongs to the NqrDE/RnfAE family. In terms of assembly, composed of six subunits; NqrA, NqrB, NqrC, NqrD, NqrE and NqrF.

The protein resides in the cell inner membrane. The catalysed reaction is a ubiquinone + n Na(+)(in) + NADH + H(+) = a ubiquinol + n Na(+)(out) + NAD(+). In terms of biological role, NQR complex catalyzes the reduction of ubiquinone-1 to ubiquinol by two successive reactions, coupled with the transport of Na(+) ions from the cytoplasm to the periplasm. NqrA to NqrE are probably involved in the second step, the conversion of ubisemiquinone to ubiquinol. This is Na(+)-translocating NADH-quinone reductase subunit D from Shewanella piezotolerans (strain WP3 / JCM 13877).